The chain runs to 228 residues: MQLKKPHFQPNKIANCIVIGGMIALGKTTIANTLANHIQAAKVVCELETNDQLVELLLAKMYERSDELLYSPLFQLYFTLNRFGKYQNNCNTINPTIFDRSIFEDWLFAKHNIIRPAVFSYYNQLWNRLAKELVNKHGVPNLYVILDGDWKLFEKRLFMRNRKVEIDNFTKNQLYFQNLHRVYTGFMEAVCNDFGINYCIIDAKLPIVTIIKMILEKLKLQKLDWKFI.

ATP is bound at residue 21–28 (GMIALGKT).

This is an uncharacterized protein from Mycoplasma genitalium (strain ATCC 33530 / DSM 19775 / NCTC 10195 / G37) (Mycoplasmoides genitalium).